The sequence spans 443 residues: Aspartate--tRNA(Asp/Asn) ligase (443 aa).

Residue Glu-175 coordinates L-aspartate. An aspartate region spans residues 197 to 200 (QLFK). Arg-219 lines the L-aspartate pocket. ATP is bound by residues 219 to 221 (RAE), 227 to 229 (RHL), and Glu-366. Residues Glu-366 and Ser-369 each contribute to the Mg(2+) site. 2 residues coordinate L-aspartate: Ser-369 and Arg-373. 414–417 (GCER) contacts ATP.

It belongs to the class-II aminoacyl-tRNA synthetase family. Type 2 subfamily. Homodimer. Mg(2+) serves as cofactor.

The protein resides in the cytoplasm. The catalysed reaction is tRNA(Asx) + L-aspartate + ATP = L-aspartyl-tRNA(Asx) + AMP + diphosphate. Functionally, aspartyl-tRNA synthetase with relaxed tRNA specificity since it is able to aspartylate not only its cognate tRNA(Asp) but also tRNA(Asn). Reaction proceeds in two steps: L-aspartate is first activated by ATP to form Asp-AMP and then transferred to the acceptor end of tRNA(Asp/Asn). The protein is Aspartate--tRNA(Asp/Asn) ligase of Methanococcoides burtonii (strain DSM 6242 / NBRC 107633 / OCM 468 / ACE-M).